A 379-amino-acid chain; its full sequence is Cysteine-rich receptor-like protein kinase 44 (379 aa).

Residues 56-336 (FSPYNHLGEG…VRMLNANSFT (281 aa)) enclose the Protein kinase domain. Residues 62–70 (LGEGGFGAV) and Lys-84 each bind ATP. Tyr-129 carries the post-translational modification Phosphotyrosine. The Proton acceptor role is filled by Asp-181. Position 185 is a phosphoserine (Ser-185). The residue at position 223 (Thr-223) is a Phosphothreonine. A Phosphotyrosine modification is found at Tyr-231.

This sequence belongs to the protein kinase superfamily. Ser/Thr protein kinase family. CRK subfamily.

It carries out the reaction L-seryl-[protein] + ATP = O-phospho-L-seryl-[protein] + ADP + H(+). The enzyme catalyses L-threonyl-[protein] + ATP = O-phospho-L-threonyl-[protein] + ADP + H(+). The chain is Cysteine-rich receptor-like protein kinase 44 from Arabidopsis thaliana (Mouse-ear cress).